Consider the following 347-residue polypeptide: UDP-N-acetylenolpyruvoylglucosamine reductase (347 aa).

One can recognise an FAD-binding PCMH-type domain in the interval 27-197 (LPARAQRLAR…TGIELRLNKM (171 aa)). Residue arginine 173 is part of the active site. Catalysis depends on serine 247, which acts as the Proton donor. Glutamate 342 is a catalytic residue.

This sequence belongs to the MurB family. It depends on FAD as a cofactor.

Its subcellular location is the cytoplasm. It carries out the reaction UDP-N-acetyl-alpha-D-muramate + NADP(+) = UDP-N-acetyl-3-O-(1-carboxyvinyl)-alpha-D-glucosamine + NADPH + H(+). It functions in the pathway cell wall biogenesis; peptidoglycan biosynthesis. Functionally, cell wall formation. In Alcanivorax borkumensis (strain ATCC 700651 / DSM 11573 / NCIMB 13689 / SK2), this protein is UDP-N-acetylenolpyruvoylglucosamine reductase.